A 489-amino-acid chain; its full sequence is 5'-AMP-activated protein kinase subunit gamma-3 (489 aa).

The interval 1-113 (MEPGLEHALR…PAGVGTPPTG (113 aa)) is disordered. Residues 34–46 (SSSWPSPAVTSSS) are compositionally biased toward low complexity. Over residues 50–62 (RGKRRAKALRWTR) the composition is skewed to basic residues. CBS domains follow at residues 197 to 258 (MATS…RSPL), 280 to 340 (CFKP…LLPR), and 355 to 415 (TFRD…HLDM). ADP is bound by residues R225, 240–245 (MLTITD), V285, 306–307 (HR), and K325. AMP-binding positions include R225, 240–245 (MLTITD), V285, H306, 306–307 (HR), K325, T355, A360, 381–382 (SA), 397–400 (SRFD), R424, L432, H453, 453–454 (HR), and 469–472 (SLSD). ATP-binding positions include R225, 240–245 (MLTITD), V285, 306–307 (HR), R307, and K325. An AMPK pseudosubstrate motif is present at residues 293 to 314 (LFEAVYTLIKNRIHRLPVLDPV). ADP is bound by residues 397–400 (SRFD), R424, L432, and 453–454 (HR). ATP-binding positions include 397–400 (SRFD), R424, L432, and 453–454 (HR). The 60-residue stretch at 427–486 (CLEGVLSCQPHESLGEVIDRIAREQVHRLVLVDETQHLLGVVSLSDILQALVLSPAGIDA) folds into the CBS 4 domain.

It belongs to the 5'-AMP-activated protein kinase gamma subunit family. As to quaternary structure, AMPK is a heterotrimer of an alpha catalytic subunit (PRKAA1 or PRKAA2), a beta (PRKAB1 or PRKAB2) and a gamma non-catalytic subunits (PRKAG1, PRKAG2 or PRKAG3). Interacts with FNIP1 and FNIP2. Post-translationally, phosphorylated by ULK1; leading to negatively regulate AMPK activity and suggesting the existence of a regulatory feedback loop between ULK1 and AMPK. In terms of processing, glycosylated; O-GlcNAcylated by OGT, promoting the AMP-activated protein kinase (AMPK) activity. As to expression, skeletal muscle, with weak expression in heart and pancreas.

Its function is as follows. AMP/ATP-binding subunit of AMP-activated protein kinase (AMPK), an energy sensor protein kinase that plays a key role in regulating cellular energy metabolism. In response to reduction of intracellular ATP levels, AMPK activates energy-producing pathways and inhibits energy-consuming processes: inhibits protein, carbohydrate and lipid biosynthesis, as well as cell growth and proliferation. AMPK acts via direct phosphorylation of metabolic enzymes, and by longer-term effects via phosphorylation of transcription regulators. AMPK also acts as a regulator of cellular polarity by remodeling the actin cytoskeleton; probably by indirectly activating myosin. The AMPK gamma3 subunit is a non-catalytic subunit with a regulatory role in muscle energy metabolism. It mediates binding to AMP, ADP and ATP, leading to AMPK activation or inhibition: AMP-binding results in allosteric activation of alpha catalytic subunit (PRKAA1 or PRKAA2) both by inducing phosphorylation and preventing dephosphorylation of catalytic subunits. ADP also stimulates phosphorylation, without stimulating already phosphorylated catalytic subunit. ATP promotes dephosphorylation of catalytic subunit, rendering the AMPK enzyme inactive. The chain is 5'-AMP-activated protein kinase subunit gamma-3 (PRKAG3) from Homo sapiens (Human).